We begin with the raw amino-acid sequence, 171 residues long: MIREIIRMGDKRLLRVAPPVTNLGSDELHALVADMFETMDAARGVGLAAPQIAVDLQLMVFGFEASERYPEAPAVPRTALANVQIEPLSDEMENGWEGCLSIPGLRAVIPRHRVIRYSGFAPDGTPIEREAEGFHARVVQHEYDHLVGRLYPSRIENFDTFGFEDVLSYDL.

2 residues coordinate Fe cation: Cys-99 and His-141. The active site involves Glu-142. His-145 contributes to the Fe cation binding site.

Belongs to the polypeptide deformylase family. Fe(2+) serves as cofactor.

It catalyses the reaction N-terminal N-formyl-L-methionyl-[peptide] + H2O = N-terminal L-methionyl-[peptide] + formate. Functionally, removes the formyl group from the N-terminal Met of newly synthesized proteins. Requires at least a dipeptide for an efficient rate of reaction. N-terminal L-methionine is a prerequisite for activity but the enzyme has broad specificity at other positions. This Xanthomonas campestris pv. campestris (strain ATCC 33913 / DSM 3586 / NCPPB 528 / LMG 568 / P 25) protein is Peptide deformylase 1.